We begin with the raw amino-acid sequence, 445 residues long: tRNA(Ile)-lysidine synthase (445 aa).

19–24 (SGGIDS) lines the ATP pocket.

It belongs to the tRNA(Ile)-lysidine synthase family.

The protein localises to the cytoplasm. It carries out the reaction cytidine(34) in tRNA(Ile2) + L-lysine + ATP = lysidine(34) in tRNA(Ile2) + AMP + diphosphate + H(+). Its function is as follows. Ligates lysine onto the cytidine present at position 34 of the AUA codon-specific tRNA(Ile) that contains the anticodon CAU, in an ATP-dependent manner. Cytidine is converted to lysidine, thus changing the amino acid specificity of the tRNA from methionine to isoleucine. The protein is tRNA(Ile)-lysidine synthase of Buchnera aphidicola subsp. Schizaphis graminum (strain Sg).